The following is a 351-amino-acid chain: Geranylgeranyl pyrophosphate synthase (351 aa).

Residues K55, R58, and Q93 each contribute to the isopentenyl diphosphate site. The Mg(2+) site is built by D100 and D104. R109 provides a ligand contact to dimethylallyl diphosphate. R110 serves as a coordination point for isopentenyl diphosphate. 5 residues coordinate dimethylallyl diphosphate: K196, T197, Q236, K253, and K262.

It belongs to the FPP/GGPP synthase family. In terms of assembly, interacts with fps1. Requires Mg(2+) as cofactor.

It is found in the cytoplasm. Its subcellular location is the nucleus. It carries out the reaction isopentenyl diphosphate + dimethylallyl diphosphate = (2E)-geranyl diphosphate + diphosphate. The enzyme catalyses isopentenyl diphosphate + (2E)-geranyl diphosphate = (2E,6E)-farnesyl diphosphate + diphosphate. It catalyses the reaction isopentenyl diphosphate + (2E,6E)-farnesyl diphosphate = (2E,6E,10E)-geranylgeranyl diphosphate + diphosphate. It functions in the pathway isoprenoid biosynthesis; farnesyl diphosphate biosynthesis; farnesyl diphosphate from geranyl diphosphate and isopentenyl diphosphate: step 1/1. It participates in isoprenoid biosynthesis; geranyl diphosphate biosynthesis; geranyl diphosphate from dimethylallyl diphosphate and isopentenyl diphosphate: step 1/1. The protein operates within isoprenoid biosynthesis; geranylgeranyl diphosphate biosynthesis; geranylgeranyl diphosphate from farnesyl diphosphate and isopentenyl diphosphate: step 1/1. In terms of biological role, catalyzes the trans-addition of the 3 molecules of IPP onto DMAPP to form geranylgeranyl pyrophosphate. Required for the membrane attachment of ypt7 and rhb1. May be involved in vesicle trafficking and protein sorting. Required for forespore membrane formation. In Schizosaccharomyces pombe (strain 972 / ATCC 24843) (Fission yeast), this protein is Geranylgeranyl pyrophosphate synthase (spo9).